We begin with the raw amino-acid sequence, 345 residues long: Myb/SANT-like DNA-binding domain-containing protein 4 (345 aa).

Residues 4-77 form the Myb-like domain; sequence LKRKRKSNFS…EVKRRYLDWR (74 aa). Lys9 is covalently cross-linked (Glycyl lysine isopeptide (Lys-Gly) (interchain with G-Cter in SUMO2)). The residue at position 106 (Ser106) is a Phosphoserine. Residues Lys114 and Lys142 each participate in a glycyl lysine isopeptide (Lys-Gly) (interchain with G-Cter in SUMO2) cross-link. Positions 141–175 are disordered; the sequence is VKVEEEERDPQSPEFEIEEEEEMLSSVIPDSRREN. The residue at position 188 (Thr188) is a Phosphothreonine. A coiled-coil region spans residues 202 to 344; the sequence is HLLMNIEKQK…RLRIQKEGHL (143 aa). Glycyl lysine isopeptide (Lys-Gly) (interchain with G-Cter in SUMO2) cross-links involve residues Lys237, Lys254, and Lys273.

The chain is Myb/SANT-like DNA-binding domain-containing protein 4 (Msantd4) from Rattus norvegicus (Rat).